Consider the following 297-residue polypeptide: Nucleotide-binding protein Bxeno_A0336 (297 aa).

Residue 8–15 (GISGSGKS) participates in ATP binding. Residue 57–60 (DARS) participates in GTP binding.

The protein belongs to the RapZ-like family.

Displays ATPase and GTPase activities. This chain is Nucleotide-binding protein Bxeno_A0336, found in Paraburkholderia xenovorans (strain LB400).